A 458-amino-acid polypeptide reads, in one-letter code: Methylenetetrahydrofolate--tRNA-(uracil-5-)-methyltransferase TrmFO (458 aa).

An FAD-binding site is contributed by 12–17; that stretch reads GAGLAG.

It belongs to the MnmG family. TrmFO subfamily. FAD serves as cofactor.

It localises to the cytoplasm. It carries out the reaction uridine(54) in tRNA + (6R)-5,10-methylene-5,6,7,8-tetrahydrofolate + NADH + H(+) = 5-methyluridine(54) in tRNA + (6S)-5,6,7,8-tetrahydrofolate + NAD(+). It catalyses the reaction uridine(54) in tRNA + (6R)-5,10-methylene-5,6,7,8-tetrahydrofolate + NADPH + H(+) = 5-methyluridine(54) in tRNA + (6S)-5,6,7,8-tetrahydrofolate + NADP(+). Functionally, catalyzes the folate-dependent formation of 5-methyl-uridine at position 54 (M-5-U54) in all tRNAs. This chain is Methylenetetrahydrofolate--tRNA-(uracil-5-)-methyltransferase TrmFO, found in Deinococcus geothermalis (strain DSM 11300 / CIP 105573 / AG-3a).